Here is a 608-residue protein sequence, read N- to C-terminus: Serine/threonine-protein kinase SSN3 (608 aa).

The tract at residues 1–72 is disordered; the sequence is MSYSSASFRK…PGTVGTRTSI (72 aa). Over residues 17 to 47 the composition is skewed to low complexity; it reads SQPSQTTTTTTSANQPQSQSQQQPLQQSQQQ. Positions 49-59 are enriched in basic residues; the sequence is LHMKPNPHIPH. Residues 104–492 form the Protein kinase domain; it reads YQIMGYIAAG…ADQALLHPYF (389 aa). ATP-binding positions include 110–118 and Lys182; that span reads IAAGTYGKV. Residue Asp307 is the Proton acceptor of the active site. The interval 523-608 is disordered; sequence MTTAANNNNN…LPGGIRKKRG (86 aa). Low complexity predominate over residues 528 to 583; it reads NNNNNNNNNNNNNNNNNNNNNNNNNNNSGHQLSQQQNVQIQQVHQMQQQIHSQQLQ.

It belongs to the protein kinase superfamily. CMGC Ser/Thr protein kinase family. CDC2/CDKX subfamily. As to quaternary structure, component of the SRB8-11 complex, a regulatory module of the Mediator complex. Mg(2+) is required as a cofactor.

It localises to the nucleus. The enzyme catalyses L-seryl-[protein] + ATP = O-phospho-L-seryl-[protein] + ADP + H(+). It carries out the reaction L-threonyl-[protein] + ATP = O-phospho-L-threonyl-[protein] + ADP + H(+). The catalysed reaction is [DNA-directed RNA polymerase] + ATP = phospho-[DNA-directed RNA polymerase] + ADP + H(+). In terms of biological role, component of the SRB8-11 complex. The SRB8-11 complex is a regulatory module of the Mediator complex which is itself involved in regulation of basal and activated RNA polymerase II-dependent transcription. The SRB8-11 complex may be involved in the transcriptional repression of a subset of genes regulated by Mediator. It may inhibit the association of the Mediator complex with RNA polymerase II to form the holoenzyme complex. The SRB8-11 complex phosphorylates the C-terminal domain (CTD) of the largest subunit of RNA polymerase II. The polypeptide is Serine/threonine-protein kinase SSN3 (SSN3) (Candida albicans (strain SC5314 / ATCC MYA-2876) (Yeast)).